The sequence spans 124 residues: uncharacterized protein (124 aa).

The protein localises to the cytoplasm. It is found in the nucleus. This is an uncharacterized protein from Schizosaccharomyces pombe (strain 972 / ATCC 24843) (Fission yeast).